We begin with the raw amino-acid sequence, 256 residues long: 5'-nucleotidase SurE (256 aa).

Residues Asp-8, Asp-9, Ser-39, and Asn-91 each coordinate a divalent metal cation.

Belongs to the SurE nucleotidase family. A divalent metal cation is required as a cofactor.

It localises to the cytoplasm. It carries out the reaction a ribonucleoside 5'-phosphate + H2O = a ribonucleoside + phosphate. Its function is as follows. Nucleotidase that shows phosphatase activity on nucleoside 5'-monophosphates. The sequence is that of 5'-nucleotidase SurE from Marinobacter nauticus (strain ATCC 700491 / DSM 11845 / VT8) (Marinobacter aquaeolei).